Here is a 338-residue protein sequence, read N- to C-terminus: Glycerol-3-phosphate dehydrogenase [NAD(P)+] (338 aa).

NADPH-binding residues include serine 12, tryptophan 13, and lysine 110. Sn-glycerol 3-phosphate is bound by residues lysine 110, glycine 141, and serine 143. Alanine 145 is a binding site for NADPH. Residues lysine 196, aspartate 249, serine 259, arginine 260, and asparagine 261 each coordinate sn-glycerol 3-phosphate. Lysine 196 functions as the Proton acceptor in the catalytic mechanism. Residue arginine 260 coordinates NADPH. Valine 284 and glutamate 286 together coordinate NADPH.

It belongs to the NAD-dependent glycerol-3-phosphate dehydrogenase family.

Its subcellular location is the cytoplasm. The enzyme catalyses sn-glycerol 3-phosphate + NAD(+) = dihydroxyacetone phosphate + NADH + H(+). It catalyses the reaction sn-glycerol 3-phosphate + NADP(+) = dihydroxyacetone phosphate + NADPH + H(+). It functions in the pathway membrane lipid metabolism; glycerophospholipid metabolism. In terms of biological role, catalyzes the reduction of the glycolytic intermediate dihydroxyacetone phosphate (DHAP) to sn-glycerol 3-phosphate (G3P), the key precursor for phospholipid synthesis. The polypeptide is Glycerol-3-phosphate dehydrogenase [NAD(P)+] (Lactiplantibacillus plantarum (strain ATCC BAA-793 / NCIMB 8826 / WCFS1) (Lactobacillus plantarum)).